The following is a 369-amino-acid chain: tRNA-specific 2-thiouridylase MnmA (369 aa).

Residues 10–17 (GLSGGVDS) and leucine 36 each bind ATP. Cysteine 97 (nucleophile) is an active-site residue. The cysteines at positions 97 and 196 are disulfide-linked. Position 122 (glycine 122) interacts with ATP. An interaction with tRNA region spans residues 146–148 (KDQ). The Cysteine persulfide intermediate role is filled by cysteine 196. An interaction with tRNA region spans residues 301–302 (RY).

The protein belongs to the MnmA/TRMU family.

It localises to the cytoplasm. The catalysed reaction is S-sulfanyl-L-cysteinyl-[protein] + uridine(34) in tRNA + AH2 + ATP = 2-thiouridine(34) in tRNA + L-cysteinyl-[protein] + A + AMP + diphosphate + H(+). Its function is as follows. Catalyzes the 2-thiolation of uridine at the wobble position (U34) of tRNA, leading to the formation of s(2)U34. In Thermosynechococcus vestitus (strain NIES-2133 / IAM M-273 / BP-1), this protein is tRNA-specific 2-thiouridylase MnmA.